The following is a 194-amino-acid chain: Fibroblast growth factor 7 (194 aa).

The first 31 residues, 1–31, serve as a signal peptide directing secretion; it reads MRKWILTRILPTPLYRPCFHLVCLVGTISLA. 2 N-linked (GlcNAc...) asparagine glycosylation sites follow: Asn-45 and Asn-149.

This sequence belongs to the heparin-binding growth factors family. In terms of assembly, interacts with FGFBP1. Interacts with FGFR2. Affinity between fibroblast growth factors (FGFs) and their receptors is increased by heparan sulfate glycosaminoglycans that function as coreceptors.

Its function is as follows. Growth factor active on keratinocytes. Possible major paracrine effector of normal epithelial cell proliferation. This is Fibroblast growth factor 7 (Fgf7) from Rattus norvegicus (Rat).